Here is a 520-residue protein sequence, read N- to C-terminus: Mu-like prophage FluMu protein gp29 (520 aa).

To phage Mu protein gp29.

The sequence is that of Mu-like prophage FluMu protein gp29 from Haemophilus influenzae (strain ATCC 51907 / DSM 11121 / KW20 / Rd).